The primary structure comprises 166 residues: Cytochrome b (166 aa).

4 helical membrane-spanning segments follow: residues 15-35, 77-97, 109-129, and 136-156; these read FKDI…VLIN, LGGV…PFYN, INQI…WIGA, and YVLL…INPL.

This sequence belongs to the cytochrome b family. In terms of assembly, the main subunits of complex b-c1 are: cytochrome b, cytochrome c1 and the Rieske protein. Requires heme as cofactor.

It localises to the mitochondrion inner membrane. Component of the ubiquinol-cytochrome c reductase complex (complex III or cytochrome b-c1 complex) that is part of the mitochondrial respiratory chain. The b-c1 complex mediates electron transfer from ubiquinol to cytochrome c. Contributes to the generation of a proton gradient across the mitochondrial membrane that is then used for ATP synthesis. This chain is Cytochrome b (mt:Cyt-b), found in Drosophila subobscura (Fruit fly).